We begin with the raw amino-acid sequence, 318 residues long: tRNA dimethylallyltransferase (318 aa).

21 to 28 contacts ATP; that stretch reads GPTATGKS. Position 23–28 (23–28) interacts with substrate; it reads TATGKS. The interval 46-49 is interaction with substrate tRNA; the sequence is DSMQ.

It belongs to the IPP transferase family. In terms of assembly, monomer. It depends on Mg(2+) as a cofactor.

The enzyme catalyses adenosine(37) in tRNA + dimethylallyl diphosphate = N(6)-dimethylallyladenosine(37) in tRNA + diphosphate. In terms of biological role, catalyzes the transfer of a dimethylallyl group onto the adenine at position 37 in tRNAs that read codons beginning with uridine, leading to the formation of N6-(dimethylallyl)adenosine (i(6)A). The sequence is that of tRNA dimethylallyltransferase from Acidothermus cellulolyticus (strain ATCC 43068 / DSM 8971 / 11B).